Reading from the N-terminus, the 59-residue chain is Large ribosomal subunit protein uL30 (59 aa).

This sequence belongs to the universal ribosomal protein uL30 family. Part of the 50S ribosomal subunit.

This Clostridium kluyveri (strain ATCC 8527 / DSM 555 / NBRC 12016 / NCIMB 10680 / K1) protein is Large ribosomal subunit protein uL30.